We begin with the raw amino-acid sequence, 140 residues long: MNPAHLLVLAAVCISLSGASSIAPQPLNLIQFGNMIQCNNTRPSLDFSGYGCYCGRGGSGTPVDELDRCCQVHDNCYGEAETVHECDPYWTFYSYECSEGKLTCKDNNTKCKEFVCNCDREAANCFAKAPYIDSNYKNCK.

Residues Met1–Ser21 form the signal peptide. A propeptide spanning residues Ile22–Leu27 is cleaved from the precursor. 7 disulfide bridges follow: Cys38–Cys97, Cys52–Cys139, Cys54–Cys70, Cys69–Cys125, Cys76–Cys118, Cys86–Cys111, and Cys104–Cys116. Asn39 carries N-linked (GlcNAc...) asparagine glycosylation. Residues Tyr53, Gly55, and Gly57 each contribute to the Ca(2+) site. Residue His73 is part of the active site. Asp74 serves as a coordination point for Ca(2+). A glycan (N-linked (GlcNAc...) asparagine) is linked at Asn107. Residue Asp119 is part of the active site.

It belongs to the phospholipase A2 family. Group I subfamily. D49 sub-subfamily. Ca(2+) is required as a cofactor. Expressed by the venom gland.

The protein resides in the secreted. It catalyses the reaction a 1,2-diacyl-sn-glycero-3-phosphocholine + H2O = a 1-acyl-sn-glycero-3-phosphocholine + a fatty acid + H(+). Functionally, PLA2 catalyzes the calcium-dependent hydrolysis of the 2-acyl groups in 3-sn-phosphoglycerides. The polypeptide is Phospholipase A2 (Micrurus altirostris (Uruguayan coral snake)).